The primary structure comprises 635 residues: Factor of DNA methylation 2 (635 aa).

A coiled-coil region spans residues 289-471; sequence LDEKKNLHQA…ESMNSVLMTK (183 aa). The span at 350-365 shows a compositional bias: basic and acidic residues; that stretch reads ELERQKLDEDKRKSDA. Positions 350–376 are disordered; that stretch reads ELERQKLDEDKRKSDAMNKSLQLASRE.

In terms of assembly, forms a complex with IDN2 and FMD1/INDL1. Highly expressed in flowers and at lower levels in roots, leaves and stems.

Its function is as follows. Forms a complex with IDN2 and FDM1/IDNL1 that is required for RNA-directed DNA methylation (RdDM) and that functions at a downstream step of the RdDM pathway. This Arabidopsis thaliana (Mouse-ear cress) protein is Factor of DNA methylation 2.